The chain runs to 187 residues: Elongation factor P (187 aa).

Position 34 is an N6-(3,6-diaminohexanoyl)-5-hydroxylysine (Lys-34).

It belongs to the elongation factor P family. Post-translationally, may be beta-lysylated on the epsilon-amino group of Lys-34 by the combined action of EpmA and EpmB, and then hydroxylated on the C5 position of the same residue by EpmC (if this protein is present). Lysylation is critical for the stimulatory effect of EF-P on peptide-bond formation. The lysylation moiety may extend toward the peptidyltransferase center and stabilize the terminal 3-CCA end of the tRNA. Hydroxylation of the C5 position on Lys-34 may allow additional potential stabilizing hydrogen-bond interactions with the P-tRNA.

The protein localises to the cytoplasm. The protein operates within protein biosynthesis; polypeptide chain elongation. In terms of biological role, involved in peptide bond synthesis. Alleviates ribosome stalling that occurs when 3 or more consecutive Pro residues or the sequence PPG is present in a protein, possibly by augmenting the peptidyl transferase activity of the ribosome. Modification of Lys-34 is required for alleviation. This chain is Elongation factor P, found in Buchnera aphidicola subsp. Schizaphis graminum (strain Sg).